Reading from the N-terminus, the 176-residue chain is MPIKPLIILPDPILRQVSKPVERVDAPLRKLADDMLATMYDAPGIGLAAIQIGEPLRMLVIDLAKEDETPAPHVFINPEILESAEARSVYEEGCLSIPDYYAEVERPASVRVKYLDRDGKLQEMEAEGLMATCLQHEIDHLNGVLFIDHISKLKRDMVVKKFKKLAKDKAPGKLVG.

Residues Cys-94 and His-136 each contribute to the Fe cation site. Glu-137 is a catalytic residue. His-140 contributes to the Fe cation binding site.

The protein belongs to the polypeptide deformylase family. Requires Fe(2+) as cofactor.

The catalysed reaction is N-terminal N-formyl-L-methionyl-[peptide] + H2O = N-terminal L-methionyl-[peptide] + formate. Its function is as follows. Removes the formyl group from the N-terminal Met of newly synthesized proteins. Requires at least a dipeptide for an efficient rate of reaction. N-terminal L-methionine is a prerequisite for activity but the enzyme has broad specificity at other positions. This Mesorhizobium japonicum (strain LMG 29417 / CECT 9101 / MAFF 303099) (Mesorhizobium loti (strain MAFF 303099)) protein is Peptide deformylase.